A 419-amino-acid polypeptide reads, in one-letter code: Transcription termination factor Rho (419 aa).

The region spanning 48–123 (DIFGDGVLEI…LKVNEVNFDK (76 aa)) is the Rho RNA-BD domain. RNA-binding stretches follow at residues 61–66 (GFGFLR), 78–80 (DIY), and 108–110 (ERY). ATP contacts are provided by residues 169–174 (GRGQRG), 181–186 (KAGKTM), and Arg212. Residues 284 to 288 (VLTGG) are RNA-binding 2.

It belongs to the Rho family. In terms of assembly, homohexamer. The homohexamer assembles into an open ring structure.

Facilitates transcription termination by a mechanism that involves Rho binding to the nascent RNA, activation of Rho's RNA-dependent ATPase activity, and release of the mRNA from the DNA template. The sequence is that of Transcription termination factor Rho from Escherichia coli O157:H7.